Consider the following 60-residue polypeptide: Large ribosomal subunit protein uL30 (60 aa).

It belongs to the universal ribosomal protein uL30 family. In terms of assembly, part of the 50S ribosomal subunit.

The polypeptide is Large ribosomal subunit protein uL30 (Oceanobacillus iheyensis (strain DSM 14371 / CIP 107618 / JCM 11309 / KCTC 3954 / HTE831)).